The sequence spans 731 residues: Polyribonucleotide nucleotidyltransferase (731 aa).

Mg(2+)-binding residues include aspartate 488 and aspartate 494. The KH domain maps to 555 to 614 (PRIEVINIAVDKIRDVIGSGGKVIREIVEQTGAKINIEDDGTIKIASADAKTIEAAKRWI). Positions 624 to 692 (GAIYQGTVVK…ERGKVRLSMK (69 aa)) constitute an S1 motif domain. The segment at 693–731 (AVDQKTGKEMTDDKSVKEEKCMDEKKQPENKRRRKKKEE) is disordered. Basic and acidic residues predominate over residues 694-722 (VDQKTGKEMTDDKSVKEEKCMDEKKQPEN).

This sequence belongs to the polyribonucleotide nucleotidyltransferase family. It depends on Mg(2+) as a cofactor.

It is found in the cytoplasm. The catalysed reaction is RNA(n+1) + phosphate = RNA(n) + a ribonucleoside 5'-diphosphate. Functionally, involved in mRNA degradation. Catalyzes the phosphorolysis of single-stranded polyribonucleotides processively in the 3'- to 5'-direction. The protein is Polyribonucleotide nucleotidyltransferase of Bartonella tribocorum (strain CIP 105476 / IBS 506).